A 473-amino-acid polypeptide reads, in one-letter code: Azaphilone pigments biosynthesis cluster protein L (473 aa).

An N-terminal signal peptide occupies residues 1–23 (MAELSIASGIVGLLSLGIQVTQS). ANK repeat units lie at residues 403-432 (EYGN…DVNA) and 436-465 (RYGN…NVST). N-linked (GlcNAc...) asparagine glycosylation occurs at Asn462.

Its function is as follows. Part of the gene cluster that mediates the biosynthesis of azaphilone pigments (MonAzPs), a complex mixture of compounds with a common azaphilone skeleton very widely used as food colorants. Seems not to play a direct role in the biosynthesis but might have a regulatorx function. This chain is Azaphilone pigments biosynthesis cluster protein L, found in Monascus ruber (Mold).